Consider the following 248-residue polypeptide: Tetraspanin-18 (248 aa).

Residues 1–13 (MEGDCLSCMKYLM) lie on the Cytoplasmic side of the membrane. The helical transmembrane segment at 14 to 34 (FVFNFFIFLGGACLLAIGIWV) threads the bilayer. Residues 35–49 (MVDPTGFREIVAANP) lie on the Extracellular side of the membrane. Residues 50-70 (LLLTGAYILLAMGGLLFLLGF) traverse the membrane as a helical segment. The Cytoplasmic portion of the chain corresponds to 71-83 (LGCCGAVRENKCL). The chain crosses the membrane as a helical span at residues 84–104 (LLFFFLFILIIFLAELSAAIL). At 105 to 223 (AFIFRENLTR…TFETYVYLAG (119 aa)) the chain is on the extracellular side. N111 and N129 each carry an N-linked (GlcNAc...) asparagine glycan. A helical membrane pass occupies residues 224–244 (ALAIGVLAIELFAMIFAMCLF). Residues 245-248 (RGIQ) lie on the Cytoplasmic side of the membrane.

This sequence belongs to the tetraspanin (TM4SF) family. As to quaternary structure, interacts with ORAI1; this interaction regulates ORAI1 exit from the endoplasmic (ER), and/or Golgi, and trafficking to the cell surface. As to expression, highly expressed in primary endothelial cells. Expressed in the embryo heart. Weakly expressed the embryo skeletal muscle.

It is found in the membrane. Its function is as follows. Plays a role in the cell surface localization of ORAI1 and may participate in the regulation of Ca(2+) signaling and the VWF release in response to inflammatory stimuli. This chain is Tetraspanin-18, found in Homo sapiens (Human).